The sequence spans 1044 residues: Probable translation initiation factor IF-2 (1044 aa).

Residues 173–265 (FAGTIFGREN…LSLILLRLGI (93 aa)) enclose the DOD-type homing endonuclease domain. The region spanning 451 to 668 (TTETHNFIAN…LIAGLSQKYL (218 aa)) is the tr-type G domain. GTP is bound by residues 524–528 (DTPGH) and 578–581 (NKID).

It belongs to the TRAFAC class translation factor GTPase superfamily. Classic translation factor GTPase family. IF-2 subfamily. Post-translationally, this protein undergoes a protein self splicing that involves a post-translational excision of the intervening region (intein) followed by peptide ligation.

Functionally, function in general translation initiation by promoting the binding of the formylmethionine-tRNA to ribosomes. Seems to function along with eIF-2. The sequence is that of Probable translation initiation factor IF-2 (infB) from Pyrococcus horikoshii (strain ATCC 700860 / DSM 12428 / JCM 9974 / NBRC 100139 / OT-3).